A 507-amino-acid polypeptide reads, in one-letter code: ATP synthase subunit alpha, chloroplastic (507 aa).

Position 170 to 177 (G170 to T177) interacts with ATP. T257 is subject to Phosphothreonine.

The protein belongs to the ATPase alpha/beta chains family. F-type ATPases have 2 components, CF(1) - the catalytic core - and CF(0) - the membrane proton channel. CF(1) has five subunits: alpha(3), beta(3), gamma(1), delta(1), epsilon(1). CF(0) has four main subunits: a, b, b' and c.

It is found in the plastid. The protein resides in the chloroplast thylakoid membrane. It carries out the reaction ATP + H2O + 4 H(+)(in) = ADP + phosphate + 5 H(+)(out). Its function is as follows. Produces ATP from ADP in the presence of a proton gradient across the membrane. The alpha chain is a regulatory subunit. This Draba nemorosa (Woodland whitlowgrass) protein is ATP synthase subunit alpha, chloroplastic.